Consider the following 91-residue polypeptide: Acylphosphatase (91 aa).

The Acylphosphatase-like domain occupies 5–91 (RLHAIVEGEV…KGEFTSFDTY (87 aa)). Residues arginine 20 and asparagine 38 contribute to the active site.

Belongs to the acylphosphatase family.

The enzyme catalyses an acyl phosphate + H2O = a carboxylate + phosphate + H(+). The polypeptide is Acylphosphatase (acyP) (Metallosphaera sedula (strain ATCC 51363 / DSM 5348 / JCM 9185 / NBRC 15509 / TH2)).